Consider the following 250-residue polypeptide: UPF0524 protein C3orf70 (250 aa).

The disordered stretch occupies residues 201–250; the sequence is ESCDEDTEEGAELSSEEDYSPESSWEPDECTLLSPSQSDLEVIETIETTV. Residues 202–229 show a composition bias toward acidic residues; that stretch reads SCDEDTEEGAELSSEEDYSPESSWEPDE.

The protein belongs to the UPF0524 family.

In terms of biological role, may play a role in neuronal and neurobehavioral development. This is UPF0524 protein C3orf70 (C3orf70) from Homo sapiens (Human).